Reading from the N-terminus, the 119-residue chain is Protein TusC (119 aa).

It belongs to the DsrF/TusC family. Heterohexamer, formed by a dimer of trimers. The hexameric TusBCD complex contains 2 copies each of TusB, TusC and TusD. The TusBCD complex interacts with TusE.

The protein localises to the cytoplasm. Functionally, part of a sulfur-relay system required for 2-thiolation of 5-methylaminomethyl-2-thiouridine (mnm(5)s(2)U) at tRNA wobble positions. The protein is Protein TusC of Klebsiella pneumoniae (strain 342).